The following is a 463-amino-acid chain: Soluble pyridine nucleotide transhydrogenase (463 aa).

35–44 provides a ligand contact to FAD; sequence EKQQAVGGNC.

This sequence belongs to the class-I pyridine nucleotide-disulfide oxidoreductase family. The cofactor is FAD.

The protein localises to the cytoplasm. The enzyme catalyses NAD(+) + NADPH = NADH + NADP(+). Conversion of NADPH, generated by peripheral catabolic pathways, to NADH, which can enter the respiratory chain for energy generation. This chain is Soluble pyridine nucleotide transhydrogenase, found in Chromohalobacter salexigens (strain ATCC BAA-138 / DSM 3043 / CIP 106854 / NCIMB 13768 / 1H11).